The following is a 70-amino-acid chain: Putative membrane protein insertion efficiency factor (70 aa).

Belongs to the UPF0161 family.

The protein localises to the cell membrane. In terms of biological role, could be involved in insertion of integral membrane proteins into the membrane. This is Putative membrane protein insertion efficiency factor from Chloroflexus aurantiacus (strain ATCC 29366 / DSM 635 / J-10-fl).